Here is a 189-residue protein sequence, read N- to C-terminus: Crossover junction endodeoxyribonuclease RuvC (189 aa).

Catalysis depends on residues Asp7, Glu68, and Asp141. Mg(2+)-binding residues include Asp7, Glu68, and Asp141.

This sequence belongs to the RuvC family. As to quaternary structure, homodimer which binds Holliday junction (HJ) DNA. The HJ becomes 2-fold symmetrical on binding to RuvC with unstacked arms; it has a different conformation from HJ DNA in complex with RuvA. In the full resolvosome a probable DNA-RuvA(4)-RuvB(12)-RuvC(2) complex forms which resolves the HJ. It depends on Mg(2+) as a cofactor.

The protein resides in the cytoplasm. It carries out the reaction Endonucleolytic cleavage at a junction such as a reciprocal single-stranded crossover between two homologous DNA duplexes (Holliday junction).. Functionally, the RuvA-RuvB-RuvC complex processes Holliday junction (HJ) DNA during genetic recombination and DNA repair. Endonuclease that resolves HJ intermediates. Cleaves cruciform DNA by making single-stranded nicks across the HJ at symmetrical positions within the homologous arms, yielding a 5'-phosphate and a 3'-hydroxyl group; requires a central core of homology in the junction. The consensus cleavage sequence is 5'-(A/T)TT(C/G)-3'. Cleavage occurs on the 3'-side of the TT dinucleotide at the point of strand exchange. HJ branch migration catalyzed by RuvA-RuvB allows RuvC to scan DNA until it finds its consensus sequence, where it cleaves and resolves the cruciform DNA. The protein is Crossover junction endodeoxyribonuclease RuvC of Chlorobium phaeovibrioides (strain DSM 265 / 1930) (Prosthecochloris vibrioformis (strain DSM 265)).